The following is a 222-amino-acid chain: uncharacterized protein (222 aa).

N-linked (GlcNAc...) asparagine; by host glycosylation is found at Asn4, Asn75, Asn84, Asn104, Asn170, and Asn175. Residues 200–220 (LIIIIGIVIILLLIIVMIKTV) form a helical membrane-spanning segment.

The protein localises to the membrane. This is an uncharacterized protein from Acanthamoeba polyphaga (Amoeba).